The following is a 208-amino-acid chain: Outer-membrane lipoprotein LolB (208 aa).

A signal peptide spans 1–23 (MKPIQKLSLFRLLPLSCVLLLTA). A lipid anchor (N-palmitoyl cysteine) is attached at Cys-24. Residue Cys-24 is the site of S-diacylglycerol cysteine attachment.

Belongs to the LolB family. Monomer.

Its subcellular location is the cell outer membrane. Its function is as follows. Plays a critical role in the incorporation of lipoproteins in the outer membrane after they are released by the LolA protein. The polypeptide is Outer-membrane lipoprotein LolB (Photorhabdus laumondii subsp. laumondii (strain DSM 15139 / CIP 105565 / TT01) (Photorhabdus luminescens subsp. laumondii)).